A 209-amino-acid polypeptide reads, in one-letter code: MTYCDKSNQTSYPFVLPNLPYEKESFKPHFTAETFEYHHGKHHNAYVQNLNNLLKDKEELQKKNLEEIIDWSSQNQNIAIFNNAAQVWNHTFFWHSIKPNGGGKPSGKILKQINEDFGSFEEFCEQFKAEATGQFGSGWAWLVYHNNRLQIVKTANAGTPIANGMQPLLACDVWEHAYYIDYRNKRPDYVDIFIKHMINWEFVENNLTK.

Residues histidine 38, histidine 90, aspartate 172, and histidine 176 each contribute to the Fe(3+) site. Mn(2+)-binding residues include histidine 38, histidine 90, aspartate 172, and histidine 176.

The protein belongs to the iron/manganese superoxide dismutase family. Requires Mn(2+) as cofactor. It depends on Fe(3+) as a cofactor.

The catalysed reaction is 2 superoxide + 2 H(+) = H2O2 + O2. Functionally, destroys superoxide anion radicals which are normally produced within the cells and which are toxic to biological systems. Catalyzes the dismutation of superoxide anion radicals into O2 and H2O2 by successive reduction and oxidation of the transition metal ion at the active site. This chain is Superoxide dismutase [Mn/Fe] (sodB), found in Rickettsia bellii (strain RML369-C).